Here is a 213-residue protein sequence, read N- to C-terminus: Agglutinin isolectin 2 (213 aa).

A signal peptide spans 1–27 (MRKMMSTMALTLGAAVFLAFAAATAQA). Position 28 is a pyrrolidone carboxylic acid (Q28). Chitin-binding type-1 domains lie at 28 to 69 (QRCG…ACWT), 70 to 112 (SKRC…PCRA), 113 to 155 (DIKC…ACST), and 156 to 198 (DKPC…GCDA). Disulfide bonds link C30/C45, C39/C51, C44/C58, C62/C67, C73/C88, C82/C94, C87/C101, C105/C110, C116/C131, C125/C137, C130/C144, C148/C153, C159/C174, C168/C180, C173/C187, and C191/C196. Position 37–39 (37–39 (MEC)) interacts with substrate. 89–100 (SQYGHCGFGAEY) contacts substrate. 141-142 (SE) provides a ligand contact to substrate. The propeptide occupies 199-213 (VFAGAITANSTLLAE).

As to quaternary structure, homodimer, u-shaped.

Its function is as follows. N-acetyl-D-glucosamine / N-acetyl-D-neuraminic acid binding lectin. The chain is Agglutinin isolectin 2 from Triticum aestivum (Wheat).